We begin with the raw amino-acid sequence, 477 residues long: ETS translocation variant 1 (477 aa).

Serine 94 bears the Phosphoserine mark. A disordered region spans residues 128–179; sequence PQVGMRPSNPPTPSSTPVSPLHHASPNTAHTPKPDRAFPAHLPPSQSIPDST. Phosphoserine; by RPS6KA1 and RPS6KA5 is present on residues serine 191 and serine 216. Lysine 317 participates in a covalent cross-link: Glycyl lysine isopeptide (Lys-Gly) (interchain with G-Cter in SUMO2). Residues 335–415 constitute a DNA-binding region (ETS); it reads LQLWQFLVAL…AGERYVYKFV (81 aa).

The protein belongs to the ETS family. Post-translationally, sumoylated. In terms of processing, phosphorylated at Ser-191 and Ser-216 by RPS6KA1 and RPS6KA5; phosphorylation activates transcriptional activity. Abundant in kidney. Moderate levels seen in the heart, brain, lung, embryo and lower levels seen in spleen, intestine, testis and thymus.

It localises to the nucleus. Its function is as follows. Transcriptional activator that binds to DNA sequences containing the consensus pentanucleotide 5'-CGGA[AT]-3'. Required for olfactory dopaminergic neuron differentiation; may directly activate expression of tyrosine hydroxylase (TH). The sequence is that of ETS translocation variant 1 from Mus musculus (Mouse).